The sequence spans 380 residues: Cytochrome b (380 aa).

4 helical membrane passes run 34–54 (FGSLLALCLMTQILTGLLLAM), 78–99 (WLIRNMHANGASFFFICIYMHI), 114–134 (WNTGILLLLTLMATAFVGYVL), and 179–199 (FFALHFLLPFMIAGLTLIHLT). The heme b site is built by His-84 and His-98. 2 residues coordinate heme b: His-183 and His-197. His-202 provides a ligand contact to a ubiquinone. The next 4 helical transmembrane spans lie at 227–247 (LKDILGLTLLLLPLTTMALFS), 289–309 (LGGVLALAASVLVLFLSPLLH), 321–341 (LSQLLFWTLVANLLILTWIGS), and 348–368 (FIIIGQLASTTYFIILLILFP).

The protein belongs to the cytochrome b family. As to quaternary structure, the cytochrome bc1 complex contains 11 subunits: 3 respiratory subunits (MT-CYB, CYC1 and UQCRFS1), 2 core proteins (UQCRC1 and UQCRC2) and 6 low-molecular weight proteins (UQCRH/QCR6, UQCRB/QCR7, UQCRQ/QCR8, UQCR10/QCR9, UQCR11/QCR10 and a cleavage product of UQCRFS1). This cytochrome bc1 complex then forms a dimer. The cofactor is heme b.

It localises to the mitochondrion inner membrane. Component of the ubiquinol-cytochrome c reductase complex (complex III or cytochrome b-c1 complex) that is part of the mitochondrial respiratory chain. The b-c1 complex mediates electron transfer from ubiquinol to cytochrome c. Contributes to the generation of a proton gradient across the mitochondrial membrane that is then used for ATP synthesis. This is Cytochrome b (MT-CYB) from Hydrobates pelagicus (European storm-petrel).